A 251-amino-acid chain; its full sequence is UPF0246 protein PEPE_1842 (251 aa).

The protein belongs to the UPF0246 family.

This is UPF0246 protein PEPE_1842 from Pediococcus pentosaceus (strain ATCC 25745 / CCUG 21536 / LMG 10740 / 183-1w).